Reading from the N-terminus, the 151-residue chain is Probable ubiquitin-conjugating enzyme E2 W-B (151 aa).

Positions 3–151 (SMQKRLQKEL…TKWWYHDDTC (149 aa)) constitute a UBC core domain. Catalysis depends on Cys-91, which acts as the Glycyl thioester intermediate.

This sequence belongs to the ubiquitin-conjugating enzyme family.

The protein localises to the nucleus. The catalysed reaction is S-ubiquitinyl-[E1 ubiquitin-activating enzyme]-L-cysteine + [E2 ubiquitin-conjugating enzyme]-L-cysteine = [E1 ubiquitin-activating enzyme]-L-cysteine + S-ubiquitinyl-[E2 ubiquitin-conjugating enzyme]-L-cysteine.. The enzyme catalyses S-ubiquitinyl-[E1 ubiquitin-activating enzyme]-L-cysteine + [acceptor protein]-N-terminal-amino acid = [E1 ubiquitin-activating enzyme]-L-cysteine + N-terminal-ubiquitinyl-[acceptor protein].. It participates in protein modification; protein ubiquitination. In terms of biological role, accepts ubiquitin from the E1 complex and catalyzes its covalent attachment to other proteins. Catalyzes monoubiquitination. Involved in degradation of misfolded chaperone substrate and DNA repair. This is Probable ubiquitin-conjugating enzyme E2 W-B (ube2wb) from Danio rerio (Zebrafish).